The following is a 290-amino-acid chain: Fructose-1,6-bisphosphatase class 1 (290 aa).

Glutamate 78, aspartate 96, leucine 98, and aspartate 99 together coordinate Mg(2+). Substrate contacts are provided by residues 99–102 (DGSS), tyrosine 201, and lysine 226. Glutamate 232 is a binding site for Mg(2+).

This sequence belongs to the FBPase class 1 family. In terms of assembly, homotetramer. Mg(2+) serves as cofactor.

Its subcellular location is the cytoplasm. It catalyses the reaction beta-D-fructose 1,6-bisphosphate + H2O = beta-D-fructose 6-phosphate + phosphate. The protein operates within carbohydrate biosynthesis; gluconeogenesis. This is Fructose-1,6-bisphosphatase class 1 from Helicobacter pylori (strain Shi470).